A 510-amino-acid chain; its full sequence is ATP synthase subunit alpha (510 aa).

169–176 (GDRQTGKT) serves as a coordination point for ATP.

It belongs to the ATPase alpha/beta chains family. F-type ATPases have 2 components, CF(1) - the catalytic core - and CF(0) - the membrane proton channel. CF(1) has five subunits: alpha(3), beta(3), gamma(1), delta(1), epsilon(1). CF(0) has three main subunits: a(1), b(2) and c(9-12). The alpha and beta chains form an alternating ring which encloses part of the gamma chain. CF(1) is attached to CF(0) by a central stalk formed by the gamma and epsilon chains, while a peripheral stalk is formed by the delta and b chains.

It is found in the cell inner membrane. It carries out the reaction ATP + H2O + 4 H(+)(in) = ADP + phosphate + 5 H(+)(out). Functionally, produces ATP from ADP in the presence of a proton gradient across the membrane. The alpha chain is a regulatory subunit. The polypeptide is ATP synthase subunit alpha (Nitrobacter hamburgensis (strain DSM 10229 / NCIMB 13809 / X14)).